A 174-amino-acid polypeptide reads, in one-letter code: Inosine/xanthosine triphosphatase (174 aa).

Asp-68 contacts Mg(2+). Residue 68–69 (DA) coordinates substrate.

It belongs to the YjjX NTPase family. Homodimer. It depends on Mg(2+) as a cofactor. Mn(2+) is required as a cofactor.

The catalysed reaction is XTP + H2O = XDP + phosphate + H(+). It catalyses the reaction ITP + H2O = IDP + phosphate + H(+). In terms of biological role, phosphatase that hydrolyzes non-canonical purine nucleotides such as XTP and ITP to their respective diphosphate derivatives. Probably excludes non-canonical purines from DNA/RNA precursor pool, thus preventing their incorporation into DNA/RNA and avoiding chromosomal lesions. In Photobacterium profundum (strain SS9), this protein is Inosine/xanthosine triphosphatase.